Here is a 129-residue protein sequence, read N- to C-terminus: Replication initiation control protein YabA (129 aa).

His-103, Cys-105, Cys-119, and Cys-122 together coordinate Zn(2+).

Belongs to the YabA family. Homotetramer. Interacts with both DnaA and DnaN, acting as a bridge between these two proteins. Zn(2+) serves as cofactor.

The protein resides in the cytoplasm. It localises to the nucleoid. Involved in control of chromosome replication initiation. Inhibits the cooperative binding of DnaA to the oriC region, thus negatively regulating initiation of chromosome replication. Inhibits the ability of DnaA-ATP to form a helix on DNA; does not disassemble preformed DnaA-DNA helices. Decreases the residence time of DnaA on the chromosome at its binding sites (oriC, replication forks and promoter-binding sites). Tethers DnaA to the replication machinery via the DNA polymerase beta sliding clamp subunit (dnaN). Associates with oriC and other DnaA targets on the chromosome in a DnaA-dependent manner. The polypeptide is Replication initiation control protein YabA (Listeria innocua serovar 6a (strain ATCC BAA-680 / CLIP 11262)).